The following is a 501-amino-acid chain: TNF receptor-associated factor 2 (501 aa).

Ala2 is modified (N-acetylalanine). Ser5 bears the Phosphoserine mark. Thr7 carries the phosphothreonine modification. A Phosphoserine modification is found at Ser11. Phosphothreonine is present on Thr22. Lys31 participates in a covalent cross-link: Glycyl lysine isopeptide (Lys-Gly) (interchain with G-Cter in ubiquitin). An RING-type zinc finger spans residues 34-73 (CSACRNVLRRPFQAQCGHRYCSFCLASILSSGPQNCAACV). At Thr117 the chain carries Phosphothreonine; by PKC. 2 consecutive TRAF-type zinc fingers follow at residues 124–180 (CHEG…AHHE) and 177–233 (AHHE…EKQQ). The segment at 283 to 293 (ENIVCVLNREV) is important for interaction with BIRC2 and BIRC3. Positions 299 to 348 (TAEACSRQHRLDQDKIEALSSKVQQLERSIGLKDLAMADLEQKVLEMEAS) form a coiled coil. A Glycyl lysine isopeptide (Lys-Gly) (interchain with G-Cter in ubiquitin) cross-link involves residue Lys320. The 146-residue stretch at 351 to 496 (DGVFIWKISD…DDAIFIKAIV (146 aa)) folds into the MATH domain.

The protein belongs to the TNF receptor-associated factor family. A subfamily. As to quaternary structure, homotrimer. Heterotrimer with TRAF1. Heterotrimer with TRAF3 (via TRAF domain). The domain containing the RING-type and the first TRAF-type zinc finger can also form homodimers (in vitro). Interacts with TNFRSF1B/TNFR2. Interacts with TNFRSF5/CD40. Interacts with TNFRSF4, TNFRSF7/CD27, TNFRSF8/CD30, TNFRSF9/CD137, TNFRSF11A/RANK, TNFRSF13B/TACI, TNFRSF14, TNFRSF16/NGFR, TNFRSF17/BCMA, TNFRSF18/AITR, TNFRSF19/TROY, TNFRSF19L/RELT and EDAR. Stimulation of TNF-alpha receptor TNFRSF1A leads to the formation of two distinct signaling complexes. Plasma membrane-bound complex I is composed of TNFRSF1A, TRADD, RIPK1, TRAF2 and BIRC2/c-IAP1 or BIRC3 which interacts with CHUCK/IKK-alpha, IKBKB/IKK-beta and IKBKG/IKK-gamma promoting cell survival. Subsequently, TRADD, RIPK1 and TRAF2 dissociate from TNFRSF1A and form cytoplasmic complex II with FADD and caspase CASP8 promoting cell apoptosis. Interacts with TRADD. Identified in a complex with TNFRSF1A, RIPK1 and IKBKB/IKK-beta. Interacts with RIPK2. Interacts with BIRC2 and BIRC3 N-terminus; a single BIRC2 or BIRC3 molecule interacts with a heterotrimer formed by TRAF1 and TRAF2, or a TRAF2 homotrimer. Identified in a complex composed of TRAF2, TRAF3, BIRC2 and BIRC3. Interacts with BIRC2; the interaction promotes BIRC2 stability. Interaction with BIRC2 and/or BIRC3 is essential for ubiquitination of IKBKE, degradation of NFKBIA and activation of NF-kappa-B. Within complex I, phosphorylated TRAF2 interacts (via 'Lys-63'-linked polyubiquitin chains) with CHUCK/IKK-alpha, IKBKB/IKK-beta, IKBKG/IKK-gamma TAB2, TAB3 and TAK1 in response to TNF-alpha stimulation. Within complex I, interacts with UXT isoform 1 (via TPQE motif); the interaction prevents the recruitment of FADD and CASP8/caspase 8 to complex I. Forms a complex composed of TNFRSF8/CD30 or TNFRSF1B/TNFR2, and TRAF1, TRAF2 and E3 ligase TRAIP. Within the complex, interacts with TRAIP; the interaction inhibits TRAF2-mediated NF-kappa B activation. Component of a complex composed of TANK and TBK1. Interacts with TRPC4AP. Interacts with MAP3K1/MEKK1, MAP3K5/ASK1 and MAP3K11/MLK3 in response to TNF-alpha stimulation; the interaction leads to JNK activation and interaction with MAP3K5 is inhibited by PRMT1. Component of a complex composed of MAP3K14/NIK BIRC3 and TRAF3; the interaction leads to BIRC2/3-mediated ubiquitination of TRAF3 upon CD40 engagement in a TRAF2-dependent manner. Interacts with MAP3K14/NIK in response to TNF-alpha stimulation; the interaction leads to NF-kappa B activation. Interacts with PEG3; the interaction may promote TRAF2-mediated NF-kappa B activation. Interacts with HIVEP3; the interaction may inhibit TNF-alpha-TRAF2-mediated NF-kappa B and JNK activation. Interacts with TANK/ITRAF; the interaction prevents interaction between TNFRSF1B/TNFR2 and TRAF2. Interacts with deubiquitinating enzyme CYLD; the interaction results in the deubiquitination and inactivation of TRAF2. Interacts with SIAH2; the interaction leads to TRAF2 ubiquitination and degradation. Interacts with E2 conjugating enzyme UBE2N/Ubc13, E3 ligase ITCH and RNF11 in response to TNF-alpha stimulation. Interacts with ubiquitin-editing enzyme TNFAIP3/A20 in response to TNF-alpha stimulation; the interaction promotes TRAF2 dissociation from UBE2N/Ubc13, ITCH, RNF11 and TAX1BP1 and prevents prolonged TRAF-2 ubiquitination. Interacts with TAX1BP1 in response to TNF-alpha stimulation; the interaction promotes TRAF2 dissociation from UBE2N/Ubc13 and TNFAIP3/A20, and prevents prolonged TRAF-2 ubiquitination. Interacts (via C-terminus) with EIF2AK2/PKR (via the kinase catalytic domain). Interacts with deubiquitinating enzyme USP48. Interacts with PTPN2; probably involved in TNF-mediated signaling. Interacts with Toll-like receptor TLR4/3 adapter TICAM1/TRIF; the interaction may promote TICAM1 ubiquitination. Interacts with kinase/endoribonuclease ERN1/IRE1 and DAB2IP in response to ER stress; the interaction requires DAB2IP. Interacts with ERN1/IRE1 and TAOK3 in response to ER stress; the interaction may promote TRAF2 phosphorylation. Interacts (via zinc fingers) with DAB2IP (via C-terminus PER domain)in response to TNF-alpha stimulation. Interacts with CASP8AP2/FLASH. Interacts with NFATC2IP; the interaction may repress IL-4 production in T cells. Interacts with kinase CDK9. Interacts with sphingosine kinase 1 SPHK1. Interacts with kinase TNIK. Interacts with TRAFD1. Interacts with DNA phosphodiesterase TDP2. Interacts with MAVS/IPS1. Interacts with CARD14. Interacts with Epstein-Barr virus LMP1/BNFL1. Interacts with GPS2. Interacts with XPNPEP3. Interacts with RIPK3. Interacts with RELL2. Interacts with LRRC19. Interacts with GAPDH; promoting TRAF2 ubiquitination. In terms of processing, phosphorylated at several serine residues within the first 128 amino acid residues. Phosphorylated at Thr-117 in response to signaling via TNF and TNFRSF1A. Phosphorylation at Thr-117 is required for 'Lys-63'-linked polyubiquitination, but not for 'Lys-48'-linked polyubiquitination. Phosphorylation at Thr-117 is important for interaction with IKKA and IKKB, activation of IKK and subsequent activation of NF-kappa-B. Post-translationally, undergoes both 'Lys-48'-linked and 'Lys-63'-linked polyubiquitination. Polyubiquitinated via 'Lys-63'-linked ubiquitin in response to TNF signaling; this requires prior phosphorylation at Thr-117. 'Lys-63'-linked polyubiquitination promotes TRAF2-mediated activation of NF-kappa-B. Can be polyubiquitinated at several Lys residues via 'Lys-48'-linked ubiquitin chains in response to TNF signaling, leading to proteasomal degradation. Autoubiquitinated, leading to its subsequent proteasomal degradation. Polyubiquitinated by BIRC2 and SIAH2, leading to its subsequent proteasomal degradation. Deubiquitinated by CYLD, a protease that specifically cleaves 'Lys-63'-linked polyubiquitin chains. Ubiquination is inhibited by LRRC19; inhibits proteasomal degradation. Ubiquitinated at Lys-320 by the SCF(FBXL2) complex, leading to its degradation by the proteasome. Ubiquitinated by E3 ubiquitin-protein ligase complex containing FBXO7; leading to repression of NF-kappa-B signaling.

Its subcellular location is the cytoplasm. It catalyses the reaction S-ubiquitinyl-[E2 ubiquitin-conjugating enzyme]-L-cysteine + [acceptor protein]-L-lysine = [E2 ubiquitin-conjugating enzyme]-L-cysteine + N(6)-ubiquitinyl-[acceptor protein]-L-lysine.. The protein operates within protein modification; protein ubiquitination. With respect to regulation, has very low E3 ubiquitin ligase activity in the absence of sphingosine-1-phosphate. E3 ubiquitin ligase activity is strongly activated by cytoplasmic sphingosine-1-phosphate. Functionally, E3 ubiquitin-protein ligase that regulates activation of NF-kappa-B and JNK and plays a central role in the regulation of cell survival and apoptosis. Catalyzes 'Lys-63'-linked ubiquitination of target proteins, such as BIRC3, IKBKE, MLST8, RIPK1 and TICAM1. Is an essential constituent of several E3 ubiquitin-protein ligase complexes, where it promotes the ubiquitination of target proteins by bringing them into contact with other E3 ubiquitin ligases. Regulates BIRC2 and BIRC3 protein levels by inhibiting their autoubiquitination and subsequent degradation; this does not depend on the TRAF2 RING-type zinc finger domain. Plays a role in mediating activation of NF-kappa-B by EIF2AK2/PKR. In complex with BIRC2 or BIRC3, promotes ubiquitination of IKBKE. Acts as a regulator of mTORC1 and mTORC2 assembly by mediating 'Lys-63'-linked ubiquitination of MLST8, thereby inhibiting formation of the mTORC2 complex, while facilitating assembly of the mTORC1 complex. Required for normal antibody isotype switching from IgM to IgG. This chain is TNF receptor-associated factor 2, found in Homo sapiens (Human).